Consider the following 496-residue polypeptide: Protein nucleotidyltransferase YdiU (496 aa).

ATP is bound by residues Gly-98, Gly-100, Arg-101, Lys-116, Asp-128, Gly-129, Arg-179, and Arg-186. The Proton acceptor role is filled by Asp-259. Mg(2+)-binding residues include Asn-260 and Asp-269. Asp-269 is a binding site for ATP.

This sequence belongs to the SELO family. Requires Mg(2+) as cofactor. Mn(2+) is required as a cofactor.

It catalyses the reaction L-seryl-[protein] + ATP = 3-O-(5'-adenylyl)-L-seryl-[protein] + diphosphate. It carries out the reaction L-threonyl-[protein] + ATP = 3-O-(5'-adenylyl)-L-threonyl-[protein] + diphosphate. The enzyme catalyses L-tyrosyl-[protein] + ATP = O-(5'-adenylyl)-L-tyrosyl-[protein] + diphosphate. The catalysed reaction is L-histidyl-[protein] + UTP = N(tele)-(5'-uridylyl)-L-histidyl-[protein] + diphosphate. It catalyses the reaction L-seryl-[protein] + UTP = O-(5'-uridylyl)-L-seryl-[protein] + diphosphate. It carries out the reaction L-tyrosyl-[protein] + UTP = O-(5'-uridylyl)-L-tyrosyl-[protein] + diphosphate. Functionally, nucleotidyltransferase involved in the post-translational modification of proteins. It can catalyze the addition of adenosine monophosphate (AMP) or uridine monophosphate (UMP) to a protein, resulting in modifications known as AMPylation and UMPylation. This Albidiferax ferrireducens (strain ATCC BAA-621 / DSM 15236 / T118) (Rhodoferax ferrireducens) protein is Protein nucleotidyltransferase YdiU.